Consider the following 278-residue polypeptide: Adenylate kinase (278 aa).

50-55 (GAGKGT) provides a ligand contact to ATP. The segment at 70 to 99 (ATGDMLRAQVAKGTALGKQAKKIMNEGGLV) is NMP. Residues T71, R76, 97-99 (GLV), 126-129 (GFPR), and Q133 contribute to the AMP site. The interval 167–204 (GRLVHPASGRSYHRIFNPPKDDMKDDITGEPLVQRSDD) is LID. ATP is bound by residues R168 and 177-178 (SY). R201 and R212 together coordinate AMP. Q240 provides a ligand contact to ATP.

The protein belongs to the adenylate kinase family. AK2 subfamily. In terms of assembly, monomer.

The protein localises to the cytoplasm. The protein resides in the cytosol. It is found in the mitochondrion intermembrane space. It catalyses the reaction AMP + ATP = 2 ADP. Catalyzes the reversible transfer of the terminal phosphate group between ATP and AMP. Plays an important role in cellular energy homeostasis and in adenine nucleotide metabolism. Adenylate kinase activity is critical for regulation of the phosphate utilization and the AMP de novo biosynthesis pathways. This chain is Adenylate kinase (adk-1), found in Neurospora crassa (strain ATCC 24698 / 74-OR23-1A / CBS 708.71 / DSM 1257 / FGSC 987).